A 53-amino-acid polypeptide reads, in one-letter code: Small polypeptide DEVIL 7 (53 aa).

Basic and acidic residues predominate over residues 1–16 (MREKYTKEEAVKNWEK). The tract at residues 1–28 (MREKYTKEEAVKNWEKKKNKPSSPKGVG) is disordered. A required for DVL/RTFL small polypeptide activity region spans residues 22-53 (SSPKGVGEFLKKKKGRFYIIGKCITMLLCSHK). The helical transmembrane segment at 30-46 (FLKKKKGRFYIIGKCIT) threads the bilayer.

The protein belongs to the DVL/RTFL small polypeptides family.

The protein resides in the cell membrane. Small polypeptide acting as a regulatory molecule which coordinates cellular responses required for differentiation, growth and development, probably by restricting polar cell proliferation in lateral organs and coordinating socket cell recruitment and differentiation at trichome sites. The polypeptide is Small polypeptide DEVIL 7 (Arabidopsis thaliana (Mouse-ear cress)).